Reading from the N-terminus, the 525-residue chain is Putative EGF-like domain-containing protein R659 (525 aa).

A signal peptide spans 1 to 24; the sequence is MGNKWCGIFLTILLLAQMSQTIFG. Residues asparagine 60, asparagine 77, asparagine 171, asparagine 181, asparagine 268, and asparagine 281 are each glycosylated (N-linked (GlcNAc...) asparagine; by host). In terms of domain architecture, EGF-like spans 317–359; sequence LTQGCGNCDSNAECVFVSGSNSIVPKYQCKCKSGYVGNGTHCS. 3 disulfides stabilise this stretch: cysteine 321-cysteine 330, cysteine 324-cysteine 345, and cysteine 347-cysteine 358. N-linked (GlcNAc...) asparagine; by host glycans are attached at residues asparagine 354 and asparagine 411.

It is found in the secreted. This chain is Putative EGF-like domain-containing protein R659, found in Acanthamoeba polyphaga (Amoeba).